The chain runs to 340 residues: Dihydroorotate dehydrogenase (quinone) (340 aa).

Residues 65-69 (AGLDK) and T89 each bind FMN. K69 lines the substrate pocket. 114–118 (NRMGF) contributes to the substrate binding site. 2 residues coordinate FMN: N142 and N175. N175 is a substrate binding site. The active-site Nucleophile is the S178. N180 is a binding site for substrate. FMN-binding residues include K220 and T248. Residue 249–250 (NT) participates in substrate binding. FMN-binding positions include G271, G300, and 321 to 322 (YT).

The protein belongs to the dihydroorotate dehydrogenase family. Type 2 subfamily. As to quaternary structure, monomer. FMN serves as cofactor.

It is found in the cell membrane. It catalyses the reaction (S)-dihydroorotate + a quinone = orotate + a quinol. It participates in pyrimidine metabolism; UMP biosynthesis via de novo pathway; orotate from (S)-dihydroorotate (quinone route): step 1/1. Catalyzes the conversion of dihydroorotate to orotate with quinone as electron acceptor. The chain is Dihydroorotate dehydrogenase (quinone) from Paraburkholderia xenovorans (strain LB400).